Here is a 427-residue protein sequence, read N- to C-terminus: Serine--tRNA ligase (427 aa).

231 to 233 (TAE) lines the L-serine pocket. An ATP-binding site is contributed by 262–264 (RSE). Glu285 is a binding site for L-serine. An ATP-binding site is contributed by 349–352 (EISS). Ser385 is an L-serine binding site.

This sequence belongs to the class-II aminoacyl-tRNA synthetase family. Type-1 seryl-tRNA synthetase subfamily. In terms of assembly, homodimer. The tRNA molecule binds across the dimer.

It localises to the cytoplasm. It carries out the reaction tRNA(Ser) + L-serine + ATP = L-seryl-tRNA(Ser) + AMP + diphosphate + H(+). It catalyses the reaction tRNA(Sec) + L-serine + ATP = L-seryl-tRNA(Sec) + AMP + diphosphate + H(+). The protein operates within aminoacyl-tRNA biosynthesis; selenocysteinyl-tRNA(Sec) biosynthesis; L-seryl-tRNA(Sec) from L-serine and tRNA(Sec): step 1/1. In terms of biological role, catalyzes the attachment of serine to tRNA(Ser). Is also able to aminoacylate tRNA(Sec) with serine, to form the misacylated tRNA L-seryl-tRNA(Sec), which will be further converted into selenocysteinyl-tRNA(Sec). This is Serine--tRNA ligase from Hahella chejuensis (strain KCTC 2396).